The sequence spans 120 residues: Peptidyl-tRNA hydrolase (120 aa).

It belongs to the PTH2 family. In terms of assembly, homodimer.

The protein localises to the cytoplasm. The enzyme catalyses an N-acyl-L-alpha-aminoacyl-tRNA + H2O = an N-acyl-L-amino acid + a tRNA + H(+). Functionally, the natural substrate for this enzyme may be peptidyl-tRNAs which drop off the ribosome during protein synthesis. The sequence is that of Peptidyl-tRNA hydrolase from Saccharolobus solfataricus (strain ATCC 35092 / DSM 1617 / JCM 11322 / P2) (Sulfolobus solfataricus).